The chain runs to 154 residues: 6,7-dimethyl-8-ribityllumazine synthase (154 aa).

Residues Phe-24, 56–58 (SFE), and 80–82 (AVV) contribute to the 5-amino-6-(D-ribitylamino)uracil site. 85–86 (ET) is a (2S)-2-hydroxy-3-oxobutyl phosphate binding site. His-88 (proton donor) is an active-site residue. Residue Phe-113 coordinates 5-amino-6-(D-ribitylamino)uracil. Residue Arg-127 participates in (2S)-2-hydroxy-3-oxobutyl phosphate binding.

It belongs to the DMRL synthase family.

The catalysed reaction is (2S)-2-hydroxy-3-oxobutyl phosphate + 5-amino-6-(D-ribitylamino)uracil = 6,7-dimethyl-8-(1-D-ribityl)lumazine + phosphate + 2 H2O + H(+). The protein operates within cofactor biosynthesis; riboflavin biosynthesis; riboflavin from 2-hydroxy-3-oxobutyl phosphate and 5-amino-6-(D-ribitylamino)uracil: step 1/2. Functionally, catalyzes the formation of 6,7-dimethyl-8-ribityllumazine by condensation of 5-amino-6-(D-ribitylamino)uracil with 3,4-dihydroxy-2-butanone 4-phosphate. This is the penultimate step in the biosynthesis of riboflavin. In Thermococcus gammatolerans (strain DSM 15229 / JCM 11827 / EJ3), this protein is 6,7-dimethyl-8-ribityllumazine synthase.